The primary structure comprises 463 residues: MAATTLKDSFPLLTLLGIAFLASVCLSSRSDQDNPFVFESNRFQTLFENENGHIRLLQKFDQHSKLLENLQNYRLLEYKSKPHTIFLPQQTDADFILVVLSGKAILTVLLPNDRNSFSLERGDTIKLPAGTIGYLVNRDDEEDLRVLDLVIPVNRPGEPQSFLLSGNQNQPSILSGFSKNILEASFNTDYKEIEKVLLEEHGKEKYHRRGLKDRRQRGQEENVIVKISRKQIEELNKNAKSSSKKSTSSESEPFNLRSREPIYSNKFGKFFEITPKRNPQLQDLNIFVNYVEINEGSLLLPHYNSRAIVIVTVNEGKGDFELVGQRNENQQGLREEYDEEKEQGEEEIRKQVQNYKAKLSPGDVLVIPAGYPVAIKASSNLNLVGFGINAENNQRYFLAGEEDNVISQIHKPVKELAFPGSAQEVDTLLENQKQSHFANAQPRERERGSQEIKDHLYSILGSF.

Positions 1–27 are cleaved as a signal peptide; that stretch reads MAATTLKDSFPLLTLLGIAFLASVCLS. One can recognise a Cupin type-1 1 domain in the interval 35–194; it reads PFVFESNRFQ…SFNTDYKEIE (160 aa). The segment at 235-257 is disordered; sequence LNKNAKSSSKKSTSSESEPFNLR. Over residues 238-252 the composition is skewed to low complexity; that stretch reads NAKSSSKKSTSSESE. The Cupin type-1 2 domain maps to 254 to 426; that stretch reads FNLRSREPIY…AFPGSAQEVD (173 aa).

This sequence belongs to the 7S seed storage protein family.

The protein resides in the vacuole. It is found in the aleurone grain. Functionally, seed storage protein. The chain is Vicilin from Vicia faba (Broad bean).